The chain runs to 146 residues: Large ribosomal subunit protein uL15 (146 aa).

Positions 1–13 (MKLHELKPAEGSR) are enriched in basic and acidic residues. Residues 1-59 (MKLHELKPAEGSRKVRNRVGRGTSSGNGKTSGRGQKGQKARSGGGVRLGFEGGQTPLFR) form a disordered region. Composition is skewed to gly residues over residues 23 to 35 (TSSG…GRGQ) and 42 to 52 (SGGGVRLGFEG).

This sequence belongs to the universal ribosomal protein uL15 family. Part of the 50S ribosomal subunit.

Functionally, binds to the 23S rRNA. The sequence is that of Large ribosomal subunit protein uL15 from Streptococcus agalactiae serotype Ia (strain ATCC 27591 / A909 / CDC SS700).